Consider the following 366-residue polypeptide: Peptide chain release factor 2 (366 aa).

Glutamine 251 is subject to N5-methylglutamine.

It belongs to the prokaryotic/mitochondrial release factor family. In terms of processing, methylated by PrmC. Methylation increases the termination efficiency of RF2.

The protein localises to the cytoplasm. In terms of biological role, peptide chain release factor 2 directs the termination of translation in response to the peptide chain termination codons UGA and UAA. In Campylobacter lari (strain RM2100 / D67 / ATCC BAA-1060), this protein is Peptide chain release factor 2.